We begin with the raw amino-acid sequence, 944 residues long: MFQNDVKQPLSWEEFHGPNLGYVLELYDQYVQDPTSVDEDLRGIFDELGAPPSEMKEEIGKKENSVVTSEQIQKIASVVKLAEDIRTYGHLNASVNPLRKEKELQELFPLKEYGLTEEDVKNIPISIISPDAPKHISNGIEAINHLRNTYKRTISFEFDHVHDFEERNWLSKSIESGELFKKKPADKLVSVFKRLTEVEQFEQFLHKTFVGQKRFSIEGLDALVPVLDEIISESVTQGTSNINIGMAHRGRLNVLAHVLGKPYEIIFSEFQHAPNKELVPSEGSIGISYGWTGDVKYHLGADRQIKDEDTKSARVTLANNPSHLEFIDPIIEGSTRAAQELRTQKGYPAQDVEKALAILIHGDAAFPGEGIVAETLNLSQLVGYQVGGTIHIIANNMIGFTTESNESRSTKYASDLAKGFEIPIVHVNADDPEACLAAVQLAVEYRKRFKKDFLIDLIGYRRYGHNEMDEPSTTQPMLYDAVRKHKTVKNIFADKLVSEGLLTKEQREEIEQAVATRIEEAYQKVPSKKEHTIQEIELPEPVSNGFPAVDTSVEFDVLRKLNEELISWPDDFQVFGKLKRILEKRAKVFTDDRKVEWSLGEALAFASILKDGTPIRMTGQDSERGTFAQRNLVLHDSQTGNEFIALHELSDANASFTVHNSPLSEGSVIGFEYGYNVYSPETLVIWEAQFGDFANAAQVYFDQFISAGRAKWGQKSGLVMLLPHGYEGQGPEHSSGRTERFLQSAAENNWTVANLTSAAQYFHILRRQAKMLLREEIRPLVIMTPKSLLRNPNSLSEVQELTDGQFQPVLEQPGLVHDHEKVSRLVLSSGKVSIDISDRFTQMEEPKDWLHIARVEQLYPFPAKDIKAILSKLTNLEEIVWTQEEPQNMGAWGYIEPYLREIAPEKVKVRYIGRRRRSSTAEGDPTVHKKEQERIVSDSLTRKN.

The interval serine 918 to asparagine 944 is disordered. Basic and acidic residues predominate over residues proline 925 to valine 936.

It belongs to the alpha-ketoglutarate dehydrogenase family. As to quaternary structure, homodimer. Part of the 2-oxoglutarate dehydrogenase (OGDH) complex composed of E1 (2-oxoglutarate dehydrogenase), E2 (dihydrolipoamide succinyltransferase) and E3 (dihydrolipoamide dehydrogenase); the complex contains multiple copies of the three enzymatic components (E1, E2 and E3). Thiamine diphosphate is required as a cofactor.

It catalyses the reaction N(6)-[(R)-lipoyl]-L-lysyl-[protein] + 2-oxoglutarate + H(+) = N(6)-[(R)-S(8)-succinyldihydrolipoyl]-L-lysyl-[protein] + CO2. Its function is as follows. E1 component of the 2-oxoglutarate dehydrogenase (OGDH) complex which catalyzes the decarboxylation of 2-oxoglutarate, the first step in the conversion of 2-oxoglutarate to succinyl-CoA and CO(2). This chain is 2-oxoglutarate dehydrogenase E1 component, found in Bacillus pumilus (strain SAFR-032).